A 90-amino-acid chain; its full sequence is Small ribosomal subunit protein uS17 (90 aa).

It belongs to the universal ribosomal protein uS17 family. As to quaternary structure, part of the 30S ribosomal subunit.

In terms of biological role, one of the primary rRNA binding proteins, it binds specifically to the 5'-end of 16S ribosomal RNA. The sequence is that of Small ribosomal subunit protein uS17 from Burkholderia ambifaria (strain ATCC BAA-244 / DSM 16087 / CCUG 44356 / LMG 19182 / AMMD) (Burkholderia cepacia (strain AMMD)).